A 271-amino-acid chain; its full sequence is Cartilage-associated protein (271 aa).

The signal sequence occupies residues 1–15; the sequence is MWRTLLAALLATAGA. N-linked (GlcNAc...) asparagine glycosylation occurs at N76.

Belongs to the leprecan family. Found in articular chondrocytes. Expressed in a variety of tissues.

The protein resides in the secreted. Its subcellular location is the extracellular space. It localises to the extracellular matrix. Its function is as follows. Necessary for efficient 3-hydroxylation of fibrillar collagen prolyl residues. This chain is Cartilage-associated protein (CRTAP), found in Gallus gallus (Chicken).